A 308-amino-acid chain; its full sequence is Lysophosphatidic acid receptor 6 (308 aa).

The Extracellular segment spans residues 1 to 16 (MVSSNCSTEDSFKYTL). The N-linked (GlcNAc...) asparagine glycan is linked to Asn-5. The helical transmembrane segment at 17–43 (YGCVFSMVFVLGLIANCVAIYIFTFTL) threads the bilayer. Residues 44-52 (KVRNETTTY) are Cytoplasmic-facing. The chain crosses the membrane as a helical span at residues 53–76 (MLNLAISDLLFVFTLPFRIYYFVV). At 77–89 (RNWPFGDVLCKIS) the chain is on the extracellular side. Cys-86 and Cys-165 are joined by a disulfide. The chain crosses the membrane as a helical span at residues 90-109 (VTLFYTNMYGSILFLTCISV). Residues 110–130 (DRFLAIVHPFRSKTLRTKRNA) are Cytoplasmic-facing. The chain crosses the membrane as a helical span at residues 131-151 (RIVCVAVWITVLAGSTPASFF). Residues 152-178 (QSTNRQNNTEQRTCFENFPESTWKTYL) are Extracellular-facing. A helical membrane pass occupies residues 179–206 (SRIVIFIEIVGFFIPLILNVTCSTMVLR). Over 207–224 (TLNKPLTLSRNKLSKKKV) the chain is Cytoplasmic. The chain crosses the membrane as a helical span at residues 225–250 (LKMIFVHLVIFCFCFVPYNITLILYS). At 251–269 (LMRTQTWINCSVVTAVRTM) the chain is on the extracellular side. A helical transmembrane segment spans residues 270-289 (YPVTLCIAVSNCCFDPIVYY). Cys-281 is lipidated: S-palmitoyl cysteine. Over 290 to 308 (FTSDTNSELDKKQQVHQNT) the chain is Cytoplasmic.

This sequence belongs to the G-protein coupled receptor 1 family. Induced in activated T-cells.

The protein resides in the cell membrane. In terms of biological role, binds to oleoyl-L-alpha-lysophosphatidic acid (LPA). Intracellular cAMP is involved in the receptor activation. This chain is Lysophosphatidic acid receptor 6 (LPAR6), found in Gallus gallus (Chicken).